The primary structure comprises 379 residues: Putative nickel insertion protein (379 aa).

This sequence belongs to the LarC family.

This chain is Putative nickel insertion protein, found in Methanocaldococcus jannaschii (strain ATCC 43067 / DSM 2661 / JAL-1 / JCM 10045 / NBRC 100440) (Methanococcus jannaschii).